Consider the following 1456-residue polypeptide: Sterol 3-beta-glucosyltransferase (1456 aa).

A compositionally biased stretch (basic and acidic residues) spans 1 to 12 (MASQDRGSDRTS). Residues 1–229 (MASQDRGSDR…RSPAAAATGE (229 aa)) form a disordered region. Basic residues predominate over residues 13–22 (RRLTKKRKDG). Basic and acidic residues predominate over residues 23 to 48 (KKPMRDVSLDMPERFKDGDDAHEDVT). 2 stretches are compositionally biased toward polar residues: residues 54–63 (HTMSMNQSIF) and 109–123 (RLSTANDFQKTSGQT). Residues 236-283 (KRIQHIFEFAQEEEVISEYPCWLLQSILLQGYMYITQKHICFYAYIPK) enclose the GRAM 1 domain. Residues 287–384 (DVSKTGYLSK…WVKSIQKVIF (98 aa)) form the PH domain. Disordered stretches follow at residues 500-612 (LSPL…TASA) and 631-691 (NAFS…TRLS). Over residues 510–523 (RSSMSDISVRSSVD) the composition is skewed to low complexity. 3 stretches are compositionally biased toward basic and acidic residues: residues 524–536 (ANRKNRDVRRSMD), 544–557 (WSLEGRRLSHEAHR), and 571–584 (RVGDRSPKSPRATD). Composition is skewed to polar residues over residues 585-612 (SDSATFSLDPGTESSAAIQSMDDSTASA) and 631-650 (NAFSNGVNMSAHSQDTTRSS). The GRAM 2 domain occupies 774-840 (DNFREHFAFR…KDIENVNKEK (67 aa)). Serine 966, arginine 967, aspartate 969, alanine 1269, histidine 1271, histidine 1284, serine 1287, glycine 1288, threonine 1289, aspartate 1308, and glutamine 1309 together coordinate UDP-alpha-D-glucose.

It belongs to the glycosyltransferase 28 family.

The protein resides in the cytoplasm. It localises to the preautophagosomal structure membrane. It catalyses the reaction a sterol + UDP-alpha-D-glucose = a sterol 3-beta-D-glucoside + UDP + H(+). The enzyme catalyses ergosterol + UDP-alpha-D-glucose = ergosteryl 3-beta-D-glucoside + UDP + H(+). Sterol glycosyltransferase responsible for the glycosylation of ergosterol to form ergosterol-glucoside. The polypeptide is Sterol 3-beta-glucosyltransferase (Leptosphaeria maculans (Blackleg fungus)).